The sequence spans 161 residues: Nucleotide-binding protein Dtpsy_2240 (161 aa).

It belongs to the YajQ family.

Functionally, nucleotide-binding protein. The protein is Nucleotide-binding protein Dtpsy_2240 of Acidovorax ebreus (strain TPSY) (Diaphorobacter sp. (strain TPSY)).